We begin with the raw amino-acid sequence, 144 residues long: Bombinins BLP-7/GH-2 (144 aa).

An N-terminal signal peptide occupies residues 1 to 18 (MNFKYIVAVSFLIASTYA). Residues 19 to 43 (RSVKNDEQSLSQRDVLEEESLREIR) constitute a propeptide that is removed on maturation. N70 bears the Asparagine amide mark. The propeptide occupies 74 to 123 (TAEEHEVMKRLEAVMRDLDSLDYPEEASEMETRSFNQEEIANLFTKKEKR). I143 is subject to Isoleucine amide.

This sequence belongs to the bombinin family. As to expression, expressed by the skin glands.

It localises to the secreted. Functionally, antimicrobial peptide with activity against Gram-positive and -negative bacteria and fungi. Shows activity against P.acnes (MIC=5 uM), E.coli (MIC=5-6.3 uM), S.aureus (MIC=5-6.3 uM), M.luteus, S.cerevisiae and C.albicans (MIC=10-12.5 uM). Also reduces the production of interleukin (IL)-8 and granulocyte-macrophage colony stimulating factor (CSF2) in normal human epidermal keratinocytes (NHEKs). Shows anticancer activity against three human hepatoma cell lines. In vivo, using the rat ear edema model, suppress P.acnes-induced skin inflammation, significantly reducing the ear thickness. Shows weak hemolytic activity against human erythrocytes. In terms of biological role, shows weak antimicrobial activity but high hemolytic activity. This Bombina orientalis (Oriental fire-bellied toad) protein is Bombinins BLP-7/GH-2.